The chain runs to 593 residues: Serine/threonine-protein kinase SSN3 (593 aa).

A Protein kinase domain is found at 90–489 (YEIIGYIAAG…AIDALDHVYF (400 aa)). 96–104 (IAAGTYGKV) is an ATP binding site. A disordered region spans residues 161 to 199 (KPSHKRFTPPNNSNSTQIRSNSGSETNVRINSSSITNNS). Residues 169 to 185 (PPNNSNSTQIRSNSGSE) show a composition bias toward polar residues. Residues 186-199 (TNVRINSSSITNNS) show a composition bias toward low complexity. Position 211 (Lys211) interacts with ATP. The active-site Proton acceptor is Asp312. 2 disordered regions span residues 517–551 (DNDITNVGNDNNQANHSQKQPMHGNNNNKNGNMNG) and 569–593 (AAVSGNGNNPTSNTATGGSARKKRK). Over residues 518 to 536 (NDITNVGNDNNQANHSQKQ) the composition is skewed to polar residues. The span at 540–551 (GNNNNKNGNMNG) shows a compositional bias: low complexity. Polar residues predominate over residues 573–585 (GNGNNPTSNTATG).

It belongs to the protein kinase superfamily. CMGC Ser/Thr protein kinase family. CDC2/CDKX subfamily. As to quaternary structure, component of the SRB8-11 complex, a regulatory module of the Mediator complex. It depends on Mg(2+) as a cofactor.

The protein localises to the nucleus. The catalysed reaction is L-seryl-[protein] + ATP = O-phospho-L-seryl-[protein] + ADP + H(+). The enzyme catalyses L-threonyl-[protein] + ATP = O-phospho-L-threonyl-[protein] + ADP + H(+). It catalyses the reaction [DNA-directed RNA polymerase] + ATP = phospho-[DNA-directed RNA polymerase] + ADP + H(+). Component of the SRB8-11 complex. The SRB8-11 complex is a regulatory module of the Mediator complex which is itself involved in regulation of basal and activated RNA polymerase II-dependent transcription. The SRB8-11 complex may be involved in the transcriptional repression of a subset of genes regulated by Mediator. It may inhibit the association of the Mediator complex with RNA polymerase II to form the holoenzyme complex. The SRB8-11 complex phosphorylates the C-terminal domain (CTD) of the largest subunit of RNA polymerase II. This is Serine/threonine-protein kinase SSN3 (SSN3) from Kluyveromyces lactis (strain ATCC 8585 / CBS 2359 / DSM 70799 / NBRC 1267 / NRRL Y-1140 / WM37) (Yeast).